The chain runs to 144 residues: Large ribosomal subunit protein uL11 (144 aa).

It belongs to the universal ribosomal protein uL11 family. As to quaternary structure, part of the ribosomal stalk of the 50S ribosomal subunit. Interacts with L10 and the large rRNA to form the base of the stalk. L10 forms an elongated spine to which L12 dimers bind in a sequential fashion forming a multimeric L10(L12)X complex. One or more lysine residues are methylated.

Its function is as follows. Forms part of the ribosomal stalk which helps the ribosome interact with GTP-bound translation factors. The chain is Large ribosomal subunit protein uL11 from Streptomyces griseus subsp. griseus (strain JCM 4626 / CBS 651.72 / NBRC 13350 / KCC S-0626 / ISP 5235).